The following is a 215-amino-acid chain: MATERQYSPLDRLLLQADSAMRTLLPSSAHSQRPSPAVVQPEHKMSEADTRHVAGLMRINHTGEVCAQALYQGQALTAKLPKVRKAMERAAEEEIDHLVWCEQRIHQLGSHTSVLNPLFYSLSFGMGAVAGVISDRVSLGFVAATEDQVCKHLAEHLEQLPTEDGKSRAILQQMLSDEEHHAESALEAGGFRFPAPVKFGMSVLAKVMTKSTYRI.

Residues 26-47 form a disordered region; that stretch reads PSSAHSQRPSPAVVQPEHKMSE. Glu64, Glu94, His97, Glu146, Glu178, and His181 together coordinate Fe cation.

The protein belongs to the COQ7 family. Fe cation is required as a cofactor.

The protein resides in the cell membrane. It catalyses the reaction a 5-methoxy-2-methyl-3-(all-trans-polyprenyl)benzene-1,4-diol + AH2 + O2 = a 3-demethylubiquinol + A + H2O. It functions in the pathway cofactor biosynthesis; ubiquinone biosynthesis. Catalyzes the hydroxylation of 2-nonaprenyl-3-methyl-6-methoxy-1,4-benzoquinol during ubiquinone biosynthesis. The chain is 3-demethoxyubiquinol 3-hydroxylase from Pseudomonas syringae pv. syringae (strain B728a).